A 161-amino-acid chain; its full sequence is MAEFKVVVSDETGHTRQFEVDEQDANRFLGRNLGNEVDGNAVGLDGATLELTGGSDDAGRPMREDVSGSDLKELLLEGGVGYEPTRDGERKRITVRGRQVSDETAQVNAAVVGETPIAVLLGEEEPEDADDDGDSDVDADEATDTDAGSEEDNDDDIADAE.

Positions 119 to 161 (VLLGEEEPEDADDDGDSDVDADEATDTDAGSEEDNDDDIADAE) are disordered. Over residues 122–161 (GEEEPEDADDDGDSDVDADEATDTDAGSEEDNDDDIADAE) the composition is skewed to acidic residues.

Belongs to the eukaryotic ribosomal protein eS6 family.

The protein is Small ribosomal subunit protein eS6 of Haloquadratum walsbyi (strain DSM 16790 / HBSQ001).